The chain runs to 332 residues: DNA-directed RNA polymerase subunit alpha (332 aa).

Residues 1 to 226 are alpha N-terminal domain (alpha-NTD); sequence MLIAQRPTLT…ELFGLARELN (226 aa). Residues 243–332 form an alpha C-terminal domain (alpha-CTD) region; that stretch reads LSSELSMPIE…GYDEDESTTI (90 aa).

The protein belongs to the RNA polymerase alpha chain family. Homodimer. The RNAP catalytic core consists of 2 alpha, 1 beta, 1 beta' and 1 omega subunit. When a sigma factor is associated with the core the holoenzyme is formed, which can initiate transcription.

It carries out the reaction RNA(n) + a ribonucleoside 5'-triphosphate = RNA(n+1) + diphosphate. DNA-dependent RNA polymerase catalyzes the transcription of DNA into RNA using the four ribonucleoside triphosphates as substrates. The polypeptide is DNA-directed RNA polymerase subunit alpha (Leifsonia xyli subsp. xyli (strain CTCB07)).